We begin with the raw amino-acid sequence, 813 residues long: Molybdenum cofactor sulfurase (813 aa).

An N6-(pyridoxal phosphate)lysine modification is found at lysine 228. The active site involves cysteine 391. Positions 625-670 (PSLRHAKAHMQKHQGPKRSAAIEKSSAHSFHDPPTPPDSDSENRKR) are disordered. Basic residues predominate over residues 628 to 640 (RHAKAHMQKHQGP). The MOSC domain occupies 648–812 (KSSAHSFHDP…IKVGDKVSIG (165 aa)).

This sequence belongs to the class-V pyridoxal-phosphate-dependent aminotransferase family. MOCOS subfamily. Pyridoxal 5'-phosphate serves as cofactor.

The catalysed reaction is Mo-molybdopterin + L-cysteine + AH2 = thio-Mo-molybdopterin + L-alanine + A + H2O. Functionally, sulfurates the molybdenum cofactor. Sulfation of molybdenum is essential for xanthine dehydrogenase (XDH) and aldehyde oxidase (ADO) enzymes in which molybdenum cofactor is liganded by 1 oxygen and 1 sulfur atom in active form. This chain is Molybdenum cofactor sulfurase, found in Botryotinia fuckeliana (strain B05.10) (Noble rot fungus).